The sequence spans 1311 residues: Clustered mitochondria protein homolog (1311 aa).

Low complexity predominate over residues 1–18 (MAEKTNGAAAPNGAADAP). The disordered stretch occupies residues 1–27 (MAEKTNGAAAPNGAADAPKSSPEQAQD). The 245-residue stretch at 324–568 (DITRTQESFL…RITPLDVSWQ (245 aa)) folds into the Clu domain. One copy of the TPR 1 repeat lies at 491–525 (IDYGAVDGKDLVATDERFVPQFQKLSKALKVKPHA). Positions 606 to 630 (SEVAKRGQAKKDQAAVEEKKEAKAE) are enriched in basic and acidic residues. 2 disordered regions span residues 606–694 (SEVA…SSDR) and 925–966 (PAPV…SSTI). Residues 631–661 (SEEDSDSSSEEESSSDESDSEESSSDEDEEE) show a composition bias toward acidic residues. Residues 665–675 (PKKKSVPKKAA) show a composition bias toward basic residues. A compositionally biased stretch (basic and acidic residues) spans 676-694 (KKEEVKEEKKDEKEASSDR). TPR repeat units follow at residues 1034-1067 (ARVYHSLAMLYFQLEEKDAAVELARKAVIVAERT), 1076-1109 (LLDYLNLSLFLYQLGDSKQALEFTKHALNMWKII), and 1118-1151 (ITTINNAAVMLQQLKEYHESRRWFEEALRICEVV). Basic and acidic residues predominate over residues 1276–1286 (LKFIEGTDKQK). Positions 1276–1311 (LKFIEGTDKQKKPAAKKRTGRANPKRRGAEPVSTKA) are disordered. Over residues 1287-1301 (KPAAKKRTGRANPKR) the composition is skewed to basic residues.

The protein belongs to the CLU family. In terms of assembly, may associate with the eukaryotic translation initiation factor 3 (eIF-3) complex.

Its subcellular location is the cytoplasm. Functionally, mRNA-binding protein involved in proper cytoplasmic distribution of mitochondria. This Pyricularia oryzae (strain 70-15 / ATCC MYA-4617 / FGSC 8958) (Rice blast fungus) protein is Clustered mitochondria protein homolog.